The sequence spans 454 residues: Chromosomal replication initiator protein DnaA (454 aa).

Positions 1–71 (MTKEQWGQLQ…HEVRQEDPAV (71 aa)) are domain I, interacts with DnaA modulators. A domain II region spans residues 71 to 112 (VRRLRFAVPSHVNATTKPARPAQATAPRAPAEKTPRSTLSTA). The tract at residues 82–108 (VNATTKPARPAQATAPRAPAEKTPRST) is disordered. Residues 84-99 (ATTKPARPAQATAPRA) are compositionally biased toward low complexity. The tract at residues 113–334 (PLDARFTFDN…GALTRLCAFA (222 aa)) is domain III, AAA+ region. Residues Gly157, Gly159, Lys160, and Thr161 each contribute to the ATP site. The segment at 335–454 (SLVGREIDME…LELLRRALEE (120 aa)) is domain IV, binds dsDNA.

Belongs to the DnaA family. In terms of assembly, oligomerizes as a right-handed, spiral filament on DNA at oriC.

The protein resides in the cytoplasm. In terms of biological role, plays an essential role in the initiation and regulation of chromosomal replication. ATP-DnaA binds to the origin of replication (oriC) to initiate formation of the DNA replication initiation complex once per cell cycle. Binds the DnaA box (a 9 base pair repeat at the origin) and separates the double-stranded (ds)DNA. Forms a right-handed helical filament on oriC DNA; dsDNA binds to the exterior of the filament while single-stranded (ss)DNA is stabiized in the filament's interior. The ATP-DnaA-oriC complex binds and stabilizes one strand of the AT-rich DNA unwinding element (DUE), permitting loading of DNA polymerase. After initiation quickly degrades to an ADP-DnaA complex that is not apt for DNA replication. Binds acidic phospholipids. The polypeptide is Chromosomal replication initiator protein DnaA (Roseobacter denitrificans (strain ATCC 33942 / OCh 114) (Erythrobacter sp. (strain OCh 114))).